Here is an 88-residue protein sequence, read N- to C-terminus: Alpha-conotoxin GVIIIB (88 aa).

A signal peptide spans 1–20; it reads MMSKMGAMFVLLLLFTLASS. A propeptide spanning residues 21-43 is cleaved from the precursor; it reads QQEGDVQARKTRPKSDFYRALPR. Thr87 is modified (threonine amide).

The protein belongs to the conotoxin S superfamily. In terms of processing, contains 5 disulfide bonds. The predominant peptide contains 2 hydroxyprolines, while 2 minor peptides contains 1 and 3 hydroxyprolines. In terms of tissue distribution, expressed by the venom duct.

Its subcellular location is the secreted. Its function is as follows. Alpha-conotoxins act on postsynaptic membranes, they bind to the nicotinic acetylcholine receptors (nAChR) and thus inhibit them. This toxin shows high activity on alpha-9-alpha-10 (CHRNA9-CHRNA10) (IC(50)=9.79 nM). It also shows weak activity on alpha-3-beta-2 (CHRNA3-CHRNB2) (IC(50)~1 uM), alpha-6/alpha-3-beta-2-beta-3 (CHRNA6/CHRNA3-CHRNB2-CHRNB3) (IC(50)~1 uM). The toxin binds to the same or overlapping binding sites than conotoxin RgIA (AC P0C1D0). The polypeptide is Alpha-conotoxin GVIIIB (Conus geographus (Geography cone)).